Consider the following 608-residue polypeptide: Granule-bound starch synthase 1, chloroplastic/amyloplastic (608 aa).

The transit peptide at 1-78 (MATVIAAHFV…NGRPAAKIIC (78 aa)) directs the protein to the chloroplast. Lys-96 is an ADP-alpha-D-glucose binding site. Residues 587-608 (GSEPGTEGEEIAPLAKENVPTP) are disordered.

The protein belongs to the glycosyltransferase 1 family. Bacterial/plant glycogen synthase subfamily. Synthesized in a number of different organs, but most abundantly in tubers.

Its subcellular location is the plastid. It is found in the chloroplast. The protein resides in the amyloplast. The enzyme catalyses an NDP-alpha-D-glucose + [(1-&gt;4)-alpha-D-glucosyl](n) = [(1-&gt;4)-alpha-D-glucosyl](n+1) + a ribonucleoside 5'-diphosphate + H(+). Its pathway is glycan biosynthesis; starch biosynthesis. In terms of biological role, responsible for the synthesis of amylose in reserve starch. The sequence is that of Granule-bound starch synthase 1, chloroplastic/amyloplastic (WAXY) from Manihot esculenta (Cassava).